The chain runs to 956 residues: Endogenous retrovirus group K member 6 Pol protein (956 aa).

One can recognise a Reverse transcriptase domain in the interval 57–245; that stretch reads LEKGHIEPSF…TPFHYLGMQI (189 aa). The LPQG motif lies at 161–164; the sequence is LPQG. Positions 195-198 match the YXDD motif; sequence CIDD. Residues 460-590 form the RNase H type-1 domain; the sequence is LENALTVFTD…ADLLVSSALI (131 aa). Mg(2+) contacts are provided by aspartate 469, glutamate 497, aspartate 517, and aspartate 582. An Integrase-type zinc finger spans residues 587–628; that stretch reads SALIKAQELHALTHVNAAGLKNKFDVTWKQAKDIVQHCTQCQ. Zn(2+) contacts are provided by histidine 596, histidine 600, cysteine 624, and cysteine 627. An Integrase catalytic domain is found at 642–803; sequence RGLCPNALWQ…TSAEQHLTGK (162 aa). A DNA-binding region (integrase-type) is located at residues 811–859; it reads KLIWWKDNKNKTWEIGKVITWGRGFACVSPGENQLPVWIPTRHLKFYNE. A disordered region spans residues 865 to 890; that stretch reads KKSTSAETETSQSSTVDSQDEQNGDV. The segment covering 869–879 has biased composition (low complexity); that stretch reads SAETETSQSST.

This sequence belongs to the beta type-B retroviral polymerase family. HERV class-II K(HML-2) pol subfamily. Cleavage sites that yield the mature proteins remain to be determined.

The catalysed reaction is DNA(n) + a 2'-deoxyribonucleoside 5'-triphosphate = DNA(n+1) + diphosphate. It carries out the reaction Endonucleolytic cleavage to 5'-phosphomonoester.. In terms of biological role, early post-infection, the reverse transcriptase converts the viral RNA genome into double-stranded viral DNA. The RNase H domain of the reverse transcriptase performs two functions. It degrades the RNA template and specifically removes the RNA primer from the RNA/DNA hybrid. Following nuclear import, the integrase catalyzes the insertion of the linear, double-stranded viral DNA into the host cell chromosome. Endogenous Pol proteins may have kept, lost or modified their original function during evolution. The protein is Endogenous retrovirus group K member 6 Pol protein (ERVK-6) of Homo sapiens (Human).